A 312-amino-acid chain; its full sequence is DNA-directed RNA polymerase subunit alpha (312 aa).

The interval 1-226 is alpha N-terminal domain (alpha-NTD); that stretch reads MIEFEKPNIT…EHLDIFVNLT (226 aa). The tract at residues 243–312 is alpha C-terminal domain (alpha-CTD); sequence KEKMLEMTIE…DLGLGLRKED (70 aa).

It belongs to the RNA polymerase alpha chain family. As to quaternary structure, homodimer. The RNAP catalytic core consists of 2 alpha, 1 beta, 1 beta' and 1 omega subunit. When a sigma factor is associated with the core the holoenzyme is formed, which can initiate transcription.

The enzyme catalyses RNA(n) + a ribonucleoside 5'-triphosphate = RNA(n+1) + diphosphate. In terms of biological role, DNA-dependent RNA polymerase catalyzes the transcription of DNA into RNA using the four ribonucleoside triphosphates as substrates. This chain is DNA-directed RNA polymerase subunit alpha, found in Lacticaseibacillus casei (strain BL23) (Lactobacillus casei).